The sequence spans 299 residues: F-actin-capping protein subunit alpha-3 (299 aa).

S290 carries the post-translational modification Phosphoserine.

Belongs to the F-actin-capping protein alpha subunit family. Component of the F-actin capping complex, composed of a heterodimer of an alpha and a beta subunit. Component of the WASH complex, composed of F-actin-capping protein subunit alpha (CAPZA1, CAPZA2 or CAPZA3), F-actin-capping protein subunit beta (CAPZB), WASHC1, WASHC2, WASHC3, WASHC4 and WASHC5.

Its function is as follows. F-actin-capping proteins bind in a Ca(2+)-independent manner to the fast growing ends of actin filaments (barbed end) thereby blocking the exchange of subunits at these ends. Unlike other capping proteins (such as gelsolin and severin), these proteins do not sever actin filaments. May play a role in the morphogenesis of spermatid. This is F-actin-capping protein subunit alpha-3 (CAPZA3) from Macaca fascicularis (Crab-eating macaque).